We begin with the raw amino-acid sequence, 188 residues long: Augmin complex subunit dgt4 (188 aa).

A coiled-coil region spans residues 141-163 (QREFAQNQEALRSLRTAVDGLEN).

In terms of assembly, component of the augmin complex composed of dgt2, dgt3, dgt4, dgt5, dgt6, msd1, msd5 and wac. The complex interacts directly or indirectly with microtubules and is required for centrosome-independent generation of spindle microtubules.

It localises to the cytoplasm. The protein resides in the cytoskeleton. Its subcellular location is the spindle. As part of the augmin complex, plays a role in centrosome-independent generation of spindle microtubules. The complex is required for mitotic spindle assembly through its involvement in localizing gamma-tubulin to spindle microtubules. This Drosophila melanogaster (Fruit fly) protein is Augmin complex subunit dgt4.